Reading from the N-terminus, the 396-residue chain is tRNA (guanine-N(7)-)-methyltransferase non-catalytic subunit wdr4 (396 aa).

WD repeat units lie at residues 52-91 (HGSDKILAAAFSPSGEYFALTDDNKRLVLFRTKPAWEKIS), 94-133 (WVSRRCTALTFSPCGNHILVADKSGDVFSFSVPRALEQGR), 137-178 (GHLS…MSFC), and 180-220 (GHTE…EVHS).

It belongs to the WD repeat TRM82 family. As to quaternary structure, non-catalytic component of the METTL1-WDR4 complex, composed of mettl1 and wdr4.

It localises to the nucleus. Its pathway is tRNA modification; N(7)-methylguanine-tRNA biosynthesis. In terms of biological role, non-catalytic component of the METTL1-WDR4 methyltransferase complex required for the formation of N(7)-methylguanine in a subset of RNA species, such as tRNAs, mRNAs and microRNAs (miRNAs). In the METTL1-WDR4 methyltransferase complex, wdr4 acts as a scaffold for tRNA-binding. Required for the formation of N(7)-methylguanine at position 46 (m7G46) in a large subset of tRNAs that contain the 5'-RAGGU-3' motif within the variable loop. M7G46 interacts with C13-G22 in the D-loop to stabilize tRNA tertiary structure and protect tRNAs from decay. Also required for the formation of N(7)-methylguanine at internal sites in a subset of mRNAs. Also required for methylation of a specific subset of miRNAs. The sequence is that of tRNA (guanine-N(7)-)-methyltransferase non-catalytic subunit wdr4 (wdr4) from Xenopus laevis (African clawed frog).